Here is a 727-residue protein sequence, read N- to C-terminus: Prolyl endopeptidase-like (727 aa).

Position 1 is an N-acetylmethionine (Met1). Catalysis depends on charge relay system residues Ser559, Asp645, and His690.

The protein belongs to the peptidase S9A family. Homodimer. Interacts with the AP-1 complex. As to expression, expressed in pyramidal neurons of the temporal cortex and neocortex (at protein level). Widely expressed. Expressed at higher level in brain, skeletal muscle, heart and kidney. Expressed at the endplates in the neuromuscular junction.

It is found in the cytoplasm. The protein resides in the cytosol. Its subcellular location is the golgi apparatus. It localises to the trans-Golgi network. The protein localises to the cytoskeleton. It is found in the nucleus. With respect to regulation, inhibited by PMSF and Prefabloc, as well as leupeptin at high concentrations. Partially inhibited by TPCK, a chymotrypsin inhibitor and E64, a cysteine protease inhibitor. Not affected by 4-amidinophenyl-methanesulfonyl fluoride (APMSF), pepstatin or EDTA. Inhibited by 1-isobutyl-3-oxo-3,5,6,7-tetrahydro-2H-cyclopenta[c]pyridine-4-carbonitrile. Its function is as follows. Serine peptidase whose precise substrate specificity remains unclear. Does not cleave peptides after a arginine or lysine residue. Regulates trans-Golgi network morphology and sorting by regulating the membrane binding of the AP-1 complex. May play a role in the regulation of synaptic vesicle exocytosis. The chain is Prolyl endopeptidase-like (PREPL) from Homo sapiens (Human).